A 361-amino-acid chain; its full sequence is Large ribosomal subunit protein mL45 (361 aa).

It belongs to the mitochondrion-specific ribosomal protein mL45 family.

Its subcellular location is the mitochondrion. This chain is Large ribosomal subunit protein mL45 (mrpl-45), found in Caenorhabditis briggsae.